The sequence spans 255 residues: 4-hydroxy-tetrahydrodipicolinate reductase (255 aa).

Residues Gly-9 to Met-14, Gly-89 to Thr-91, and Ala-115 to Phe-118 contribute to the NAD(+) site. The Proton donor/acceptor role is filled by His-145. His-146 provides a ligand contact to (S)-2,3,4,5-tetrahydrodipicolinate. Lys-149 functions as the Proton donor in the catalytic mechanism. Position 155–156 (Gly-155–Thr-156) interacts with (S)-2,3,4,5-tetrahydrodipicolinate.

It belongs to the DapB family.

It localises to the cytoplasm. The enzyme catalyses (S)-2,3,4,5-tetrahydrodipicolinate + NAD(+) + H2O = (2S,4S)-4-hydroxy-2,3,4,5-tetrahydrodipicolinate + NADH + H(+). The catalysed reaction is (S)-2,3,4,5-tetrahydrodipicolinate + NADP(+) + H2O = (2S,4S)-4-hydroxy-2,3,4,5-tetrahydrodipicolinate + NADPH + H(+). It functions in the pathway amino-acid biosynthesis; L-lysine biosynthesis via DAP pathway; (S)-tetrahydrodipicolinate from L-aspartate: step 4/4. Its function is as follows. Catalyzes the conversion of 4-hydroxy-tetrahydrodipicolinate (HTPA) to tetrahydrodipicolinate. This is 4-hydroxy-tetrahydrodipicolinate reductase from Streptococcus suis (strain 98HAH33).